The chain runs to 182 residues: Small ribosomal subunit protein uS4c (182 aa).

The 62-residue stretch at methionine 82–asparagine 143 folds into the S4 RNA-binding domain.

It belongs to the universal ribosomal protein uS4 family. As to quaternary structure, part of the 30S ribosomal subunit. Contacts protein S5. The interaction surface between S4 and S5 is involved in control of translational fidelity.

Its subcellular location is the plastid. The protein localises to the chloroplast. In terms of biological role, one of the primary rRNA binding proteins, it binds directly to 16S rRNA where it nucleates assembly of the body of the 30S subunit. Functionally, with S5 and S12 plays an important role in translational accuracy. This is Small ribosomal subunit protein uS4c (rps4) from Alophia veracruzana (Mexican pine woods lily).